The primary structure comprises 386 residues: Bifunctional enzyme IspD/IspF (386 aa).

The 2-C-methyl-D-erythritol 4-phosphate cytidylyltransferase stretch occupies residues 1-230 (MNSVPSLPGQ…LEEQSMSVIP (230 aa)). The segment at 231 to 386 (RTGMGFDVHR…AQAVATVVSG (156 aa)) is 2-C-methyl-D-erythritol 2,4-cyclodiphosphate synthase. A divalent metal cation is bound by residues D237 and H239. 4-CDP-2-C-methyl-D-erythritol 2-phosphate contacts are provided by residues 237-239 (DVH) and 263-264 (HS). Position 271 (H271) interacts with a divalent metal cation. 4-CDP-2-C-methyl-D-erythritol 2-phosphate is bound by residues 285 to 287 (DIG), 361 to 364 (TTTE), and R371.

It in the N-terminal section; belongs to the IspD/TarI cytidylyltransferase family. IspD subfamily. This sequence in the C-terminal section; belongs to the IspF family. Requires a divalent metal cation as cofactor.

It carries out the reaction 2-C-methyl-D-erythritol 4-phosphate + CTP + H(+) = 4-CDP-2-C-methyl-D-erythritol + diphosphate. The catalysed reaction is 4-CDP-2-C-methyl-D-erythritol 2-phosphate = 2-C-methyl-D-erythritol 2,4-cyclic diphosphate + CMP. Its pathway is isoprenoid biosynthesis; isopentenyl diphosphate biosynthesis via DXP pathway; isopentenyl diphosphate from 1-deoxy-D-xylulose 5-phosphate: step 2/6. The protein operates within isoprenoid biosynthesis; isopentenyl diphosphate biosynthesis via DXP pathway; isopentenyl diphosphate from 1-deoxy-D-xylulose 5-phosphate: step 4/6. Its function is as follows. Bifunctional enzyme that catalyzes the formation of 4-diphosphocytidyl-2-C-methyl-D-erythritol from CTP and 2-C-methyl-D-erythritol 4-phosphate (MEP) (IspD), and catalyzes the conversion of 4-diphosphocytidyl-2-C-methyl-D-erythritol 2-phosphate (CDP-ME2P) to 2-C-methyl-D-erythritol 2,4-cyclodiphosphate (ME-CPP) with a corresponding release of cytidine 5-monophosphate (CMP) (IspF). This chain is Bifunctional enzyme IspD/IspF, found in Novosphingobium aromaticivorans (strain ATCC 700278 / DSM 12444 / CCUG 56034 / CIP 105152 / NBRC 16084 / F199).